Consider the following 317-residue polypeptide: SWI/SNF-related matrix-associated actin-dependent regulator of chromatin subfamily E member 1-related (317 aa).

Residues 1 to 17 (MSHGPKQPGAAAAPAGG) are compositionally biased toward low complexity. The disordered stretch occupies residues 1-71 (MSHGPKQPGA…RKKILPNGPK (71 aa)). Residue Lys-31 forms a Glycyl lysine isopeptide (Lys-Gly) (interchain with G-Cter in SUMO2) linkage. The segment covering 31-52 (KQERGEGPRAGEKGSHEEEPVK) has biased composition (basic and acidic residues). Residues 53–65 (KRGWPKGKKRKKI) are compositionally biased toward basic residues. Positions 70–138 (PKAPVTGYVR…QYMKELRAYQ (69 aa)) form a DNA-binding region, HMG box. A Phosphoserine modification is found at Ser-160. A coiled-coil region spans residues 190-257 (EEFLDQNKAR…LQQQLQAVRQ (68 aa)).

In terms of assembly, component of a BHC histone deacetylase complex that contains HDAC1, HDAC2, HMG20B/BRAF35, KDM1A, RCOR1/CoREST and PHF21A/BHC80. The BHC complex may also contain ZMYM2, ZNF217, ZMYM3, GSE1 and GTF2I. Interacts with the BRCA2 tumor suppressor protein. Interacts with DTNB. In terms of tissue distribution, ubiquitously expressed in adult tissues.

The protein resides in the nucleus. Its subcellular location is the chromosome. In terms of biological role, required for correct progression through G2 phase of the cell cycle and entry into mitosis. Required for RCOR1/CoREST mediated repression of neuronal specific gene promoters. In Homo sapiens (Human), this protein is SWI/SNF-related matrix-associated actin-dependent regulator of chromatin subfamily E member 1-related (HMG20B).